The chain runs to 276 residues: Pyridinium-3,5-bisthiocarboxylic acid mononucleotide synthase (276 aa).

The active-site Nucleophile and sulfur donor is Cys176. Cys176 is subject to 2,3-didehydroalanine (Cys).

Belongs to the LarE family.

The catalysed reaction is pyridinium-3,5-dicarboxylate mononucleotide + [LarE protein]-L-cysteine + ATP = [LarE protein]-dehydroalanine + pyridinium-3-carboxylate-5-thiocarboxylate mononucleotide + AMP + diphosphate + H(+). It carries out the reaction [LarE protein]-L-cysteine + pyridinium-3-carboxylate-5-thiocarboxylate mononucleotide + ATP = pyridinium-3,5-bisthiocarboxylate mononucleotide + [LarE protein]-dehydroalanine + AMP + diphosphate + H(+). Functionally, involved in the biosynthesis of a nickel-pincer cofactor ((SCS)Ni(II) pincer complex). Catalyzes the ATP-dependent incorporation of two sulfur atoms in pyridinium-3,5-biscarboxylic acid mononucleotide (P2CMN) to yield pyridinium-3,5-bisthiocarboxylic acid mononucleotide (P2TMN). The source of sulfur is the enzyme itself: Cys-176 of LarE is the sulfur donor, thereby being converted into dehydroalanine, and is not regenerated in vivo. Thus, two molecules of LarE undergo sacrificial sulfur transfer to create one P2TMN. Binds nickel. Is required for the activation of the lactate racemase LarA. May also be involved in the activation of other nickel-pincer cofactor-dependent enzymes. The chain is Pyridinium-3,5-bisthiocarboxylic acid mononucleotide synthase from Lactiplantibacillus plantarum (strain ATCC BAA-793 / NCIMB 8826 / WCFS1) (Lactobacillus plantarum).